Here is a 493-residue protein sequence, read N- to C-terminus: UDP-N-acetylmuramate--L-alanine ligase (493 aa).

126–132 (GTHGKTT) serves as a coordination point for ATP.

The protein belongs to the MurCDEF family.

It localises to the cytoplasm. The enzyme catalyses UDP-N-acetyl-alpha-D-muramate + L-alanine + ATP = UDP-N-acetyl-alpha-D-muramoyl-L-alanine + ADP + phosphate + H(+). The protein operates within cell wall biogenesis; peptidoglycan biosynthesis. In terms of biological role, cell wall formation. The polypeptide is UDP-N-acetylmuramate--L-alanine ligase (Hamiltonella defensa subsp. Acyrthosiphon pisum (strain 5AT)).